The primary structure comprises 176 residues: Peptide methionine sulfoxide reductase MsrA (176 aa).

Cys-10 is a catalytic residue.

This sequence belongs to the MsrA Met sulfoxide reductase family.

The enzyme catalyses L-methionyl-[protein] + [thioredoxin]-disulfide + H2O = L-methionyl-(S)-S-oxide-[protein] + [thioredoxin]-dithiol. It catalyses the reaction [thioredoxin]-disulfide + L-methionine + H2O = L-methionine (S)-S-oxide + [thioredoxin]-dithiol. Its function is as follows. Has an important function as a repair enzyme for proteins that have been inactivated by oxidation. Catalyzes the reversible oxidation-reduction of methionine sulfoxide in proteins to methionine. In Leptospira borgpetersenii serovar Hardjo-bovis (strain JB197), this protein is Peptide methionine sulfoxide reductase MsrA.